The sequence spans 379 residues: Queuine tRNA-ribosyltransferase (379 aa).

Aspartate 91 functions as the Proton acceptor in the catalytic mechanism. Substrate-binding positions include 91 to 95, aspartate 145, glutamine 189, and glycine 216; that span reads DSGGF. The RNA binding stretch occupies residues 247–253; that stretch reads GVGKPED. Residue aspartate 266 is the Nucleophile of the active site. The tract at residues 271 to 275 is RNA binding; important for wobble base 34 recognition; that stretch reads TRNAR. Zn(2+) contacts are provided by cysteine 304, cysteine 306, cysteine 309, and histidine 335.

The protein belongs to the queuine tRNA-ribosyltransferase family. In terms of assembly, homodimer. Within each dimer, one monomer is responsible for RNA recognition and catalysis, while the other monomer binds to the replacement base PreQ1. The cofactor is Zn(2+).

The catalysed reaction is 7-aminomethyl-7-carbaguanine + guanosine(34) in tRNA = 7-aminomethyl-7-carbaguanosine(34) in tRNA + guanine. It participates in tRNA modification; tRNA-queuosine biosynthesis. Catalyzes the base-exchange of a guanine (G) residue with the queuine precursor 7-aminomethyl-7-deazaguanine (PreQ1) at position 34 (anticodon wobble position) in tRNAs with GU(N) anticodons (tRNA-Asp, -Asn, -His and -Tyr). Catalysis occurs through a double-displacement mechanism. The nucleophile active site attacks the C1' of nucleotide 34 to detach the guanine base from the RNA, forming a covalent enzyme-RNA intermediate. The proton acceptor active site deprotonates the incoming PreQ1, allowing a nucleophilic attack on the C1' of the ribose to form the product. After dissociation, two additional enzymatic reactions on the tRNA convert PreQ1 to queuine (Q), resulting in the hypermodified nucleoside queuosine (7-(((4,5-cis-dihydroxy-2-cyclopenten-1-yl)amino)methyl)-7-deazaguanosine). The chain is Queuine tRNA-ribosyltransferase from Vibrio cholerae serotype O1 (strain ATCC 39315 / El Tor Inaba N16961).